A 251-amino-acid chain; its full sequence is tRNA (guanine-N(1)-)-methyltransferase (251 aa).

Residues G122 and 142-147 (IGDYVL) each bind S-adenosyl-L-methionine. A disordered region spans residues 226–251 (RARRPDLFATRPQPNRQKPPKNTTDG). The span at 237–251 (PQPNRQKPPKNTTDG) shows a compositional bias: polar residues.

Belongs to the RNA methyltransferase TrmD family. As to quaternary structure, homodimer.

The protein resides in the cytoplasm. It carries out the reaction guanosine(37) in tRNA + S-adenosyl-L-methionine = N(1)-methylguanosine(37) in tRNA + S-adenosyl-L-homocysteine + H(+). Its function is as follows. Specifically methylates guanosine-37 in various tRNAs. The sequence is that of tRNA (guanine-N(1)-)-methyltransferase from Rhodopseudomonas palustris (strain BisB18).